Here is a 424-residue protein sequence, read N- to C-terminus: CAAX prenyl protease 1 homolog (424 aa).

5 helical membrane-spanning segments follow: residues 3–23, 67–87, 109–129, 155–175, and 185–205; these read IPFM…ETYL, EFVT…PWFW, LSFL…FSLY, GTFL…FIVQ, and LWAF…VLIA. H284 serves as a coordination point for Zn(2+). E285 is an active-site residue. H288 is a Zn(2+) binding site. 2 helical membrane-spanning segments follow: residues 295–315 and 332–352; these read TYSF…YTLV and VLIG…LVSF. Residue E362 participates in Zn(2+) binding. Residue D366 is the Proton donor of the active site.

Belongs to the peptidase M48A family. Zn(2+) serves as cofactor. Expressed in leaves, stems and flowers.

It is found in the endoplasmic reticulum membrane. It carries out the reaction Hydrolyzes the peptide bond -P2-(S-farnesyl or geranylgeranyl)C-P1'-P2'-P3'-COOH where P1' and P2' are amino acids with aliphatic side chains and P3' is any C-terminal residue.. Functionally, proteolytically removes the C-terminal three residues of farnesylated proteins. The substrate specificity is only partially overlapping with that of FACE2. The polypeptide is CAAX prenyl protease 1 homolog (FACE1) (Arabidopsis thaliana (Mouse-ear cress)).